Consider the following 1115-residue polypeptide: DNA-directed RNA polymerase subunit beta (1115 aa).

A disordered region spans residues 1084-1115 (HEAGEGEDDEYFEEDEEAVDDEPMTFDDDDME). The segment covering 1088–1115 (EGEDDEYFEEDEEAVDDEPMTFDDDDME) has biased composition (acidic residues).

It belongs to the RNA polymerase beta chain family. The RNAP catalytic core consists of 2 alpha, 1 beta, 1 beta' and 1 omega subunit. When a sigma factor is associated with the core the holoenzyme is formed, which can initiate transcription.

The enzyme catalyses RNA(n) + a ribonucleoside 5'-triphosphate = RNA(n+1) + diphosphate. DNA-dependent RNA polymerase catalyzes the transcription of DNA into RNA using the four ribonucleoside triphosphates as substrates. In Desulfitobacterium hafniense (strain Y51), this protein is DNA-directed RNA polymerase subunit beta.